Reading from the N-terminus, the 179-residue chain is Transthyretin-like protein 46 (179 aa).

An N-terminal signal peptide occupies residues 1–17; that stretch reads MNKLFVLLIALLGLTAA. Residues 144–179 are disordered; that stretch reads RRGGFNADYMDPDNSEKDQSKSSEESEDKEKTVETF. The segment covering 157-179 has biased composition (basic and acidic residues); sequence NSEKDQSKSSEESEDKEKTVETF.

This sequence belongs to the nematode transthyretin-like family.

It localises to the secreted. This is Transthyretin-like protein 46 (ttr-46) from Caenorhabditis elegans.